The primary structure comprises 215 residues: MLQVYLVRHGETQWNAERRIQGQSDSPLTAKGEQQAMQVATRAKELGITHIISSDLGRTRRTAEIIAQACGCDIIFDSRLRELNMGVLEKRHIDSLTEEEENWRRQLVNGTVDGRIPEGESMQELSDRVNAALESCRDLPQGSRPLLVSHGIALGCLVSTILGLPAWAARRLRLRNCSISRVDYQESLWLASGWVVETAGDISHLDAPALDELQR.

Residues 8–15, 21–22, R58, R60, 82–85, 104–105, and 151–152 each bind substrate; these read RHGETQWN, QG, ELNM, RR, and GI. Catalysis depends on H9, which acts as the Tele-phosphohistidine intermediate. E82 serves as the catalytic Proton donor/acceptor.

It belongs to the phosphoglycerate mutase family. GpmB subfamily.

It carries out the reaction (2R)-2-phosphoglycerate = (2R)-3-phosphoglycerate. It participates in carbohydrate degradation; glycolysis; pyruvate from D-glyceraldehyde 3-phosphate: step 3/5. The sequence is that of Probable phosphoglycerate mutase GpmB from Shigella boydii serotype 18 (strain CDC 3083-94 / BS512).